Consider the following 256-residue polypeptide: MLWQKPTAPEQAPAPARPYQGVRVKEPVKELLRRKRGHASSGAAPAPTAVVLPHQPLATYTTVGPSCLDMEGSVSAVTEEAALCAGWLSQPTPATLQPLAPWTPYTEYVPHEAVSCPYSADMYVQPVCPSYTVVGPSSVLTYASPPLITNVTTRSSATPAVGPPLEGPEHQAPLTYFPWPQPLSTLPTSTLQYQPPAPALPGPQFVQLPISIPEPVLQDMEDPRRAASSLTIDKLLLEEEDSDAYALNHTLSVEGF.

A disordered region spans residues 1–23 (MLWQKPTAPEQAPAPARPYQGVR). The OCA domain maps to 16 to 38 (ARPYQGVRVKEPVKELLRRKRGH).

The protein belongs to the POU2AF family. In terms of assembly, interacts with POU2F1/OCT1 and POU2F2/OCT2; the interaction increases POU2F1 and POU2F2 transactivation activity. Post-translationally, ubiquitinated; mediated by SIAH1 or SIAH2 and leading to its subsequent proteasomal degradation. As to expression, B-cell specific. Detected in mainly in spleen, but also in thymus, periphral blood leukocyte and small intestine.

Its subcellular location is the nucleus. Functionally, transcriptional coactivator that specifically associates with either POU2F1/OCT1 or POU2F2/OCT2. It boosts the POU2F1/OCT1 mediated promoter activity and to a lesser extent, that of POU2F2/OCT2. It recognizes the POU domains of POU2F1/OCT1 and POU2F2/OCT2. It is essential for the response of B-cells to antigens and required for the formation of germinal centers. Regulates IL6 expression in B cells as POU2F2/OCT2 coactivator. In Homo sapiens (Human), this protein is POU domain class 2-associating factor 1.